We begin with the raw amino-acid sequence, 55 residues long: Large ribosomal subunit protein bL33 (55 aa).

This sequence belongs to the bacterial ribosomal protein bL33 family.

This chain is Large ribosomal subunit protein bL33, found in Novosphingobium aromaticivorans (strain ATCC 700278 / DSM 12444 / CCUG 56034 / CIP 105152 / NBRC 16084 / F199).